An 86-amino-acid chain; its full sequence is Small ribosomal subunit protein uS17 (86 aa).

The protein belongs to the universal ribosomal protein uS17 family. As to quaternary structure, part of the 30S ribosomal subunit.

One of the primary rRNA binding proteins, it binds specifically to the 5'-end of 16S ribosomal RNA. In Streptococcus equi subsp. equi (strain 4047), this protein is Small ribosomal subunit protein uS17.